Reading from the N-terminus, the 328-residue chain is Peroxisomal adenine nucleotide transporter 1 (328 aa).

The next 6 membrane-spanning stretches (helical) occupy residues 1–21, 78–98, 128–148, 185–202, 226–246, and 277–297; these read MLTLESALTGAVASAMANIAV, TVTTVATFVQNFVYFFWYTFI, LVLGVAAASISQLFTSPMAVV, LRTGLALTINPSITYASF, FILGVLSKMISTLVTQPLIVA, and WKGVLPQLTKGVIVQGLLFAF. Solcar repeat units follow at residues 1-101, 122-208, and 220-304; these read MLTL…IRKS, PSTI…LKEV, and LSAV…LTKS.

Belongs to the mitochondrial carrier (TC 2.A.29) family.

The protein localises to the peroxisome membrane. Adenine nucleotide transporter involved in the uniport of ATP and adenine nucleotide hetero-exchange transport between the cytosol and the peroxisomal lumen. This transport is accompanied by a proton transport from the peroxisomal lumen to the cytosol. Transport of ATP into the peroxisome is required for beta-oxidation of medium-chain fatty acids. Required for growth on medium-chain fatty acids, pH gradient formation in peroxisomes and for normal peroxisome proliferation. The sequence is that of Peroxisomal adenine nucleotide transporter 1 (ANT1) from Saccharomyces cerevisiae (strain ATCC 204508 / S288c) (Baker's yeast).